Reading from the N-terminus, the 204-residue chain is Holliday junction branch migration complex subunit RuvA (204 aa).

The segment at 1-63 is domain I; sequence MIASLRGTVI…EDAMKLYGFI (63 aa). A domain II region spans residues 64 to 142; the sequence is DDQSREMFAL…AYTVGVVDDG (79 aa). A flexible linker region spans residues 143–151; the sequence is APTAPTQGV. Residues 152–204 are domain III; that stretch reads APVVVVDQVTQALTGLGFTEKQADDAVAAVLSADPGLDTSAALRAALAKLGGK.

It belongs to the RuvA family. As to quaternary structure, homotetramer. Forms an RuvA(8)-RuvB(12)-Holliday junction (HJ) complex. HJ DNA is sandwiched between 2 RuvA tetramers; dsDNA enters through RuvA and exits via RuvB. An RuvB hexamer assembles on each DNA strand where it exits the tetramer. Each RuvB hexamer is contacted by two RuvA subunits (via domain III) on 2 adjacent RuvB subunits; this complex drives branch migration. In the full resolvosome a probable DNA-RuvA(4)-RuvB(12)-RuvC(2) complex forms which resolves the HJ.

Its subcellular location is the cytoplasm. Its function is as follows. The RuvA-RuvB-RuvC complex processes Holliday junction (HJ) DNA during genetic recombination and DNA repair, while the RuvA-RuvB complex plays an important role in the rescue of blocked DNA replication forks via replication fork reversal (RFR). RuvA specifically binds to HJ cruciform DNA, conferring on it an open structure. The RuvB hexamer acts as an ATP-dependent pump, pulling dsDNA into and through the RuvAB complex. HJ branch migration allows RuvC to scan DNA until it finds its consensus sequence, where it cleaves and resolves the cruciform DNA. This Corynebacterium efficiens (strain DSM 44549 / YS-314 / AJ 12310 / JCM 11189 / NBRC 100395) protein is Holliday junction branch migration complex subunit RuvA.